Consider the following 885-residue polypeptide: Ankyrin repeat and SAM domain-containing protein 6 (885 aa).

10 ANK repeats span residues 8 to 37, 68 to 97, 101 to 130, 134 to 163, 181 to 210, 215 to 244, 282 to 312, 316 to 345, 350 to 379, and 383 to 414; these read PGLQLLLRACEQGDTDTARRLLEPGGEPVA, AGNSALQLAAAGGHEPLVRFLLRRGASVNS, YGWSALMQAARCGHASVAHLLLDHGADVNA, LGASVLTVASRGGHLGVVKLLLEAGATVDH, LGITALMAAVQHGHEAVVRLLMEWGADPNH, VGWSPLMLAALLGKLSVVQQLVEKGANPDH, KRRPDIFHALKMGNFQLVKEIADEDPNHVNL, DGATPLMLAAVTGQLPLVQLLVEKHADMNK, HGWTALMQATYHGNKEIVKYLLNQGADVTL, and NGYTAFDLVMLLNDPDTELVRLLASVCMQVNK. Asn129 is subject to 3-hydroxyasparagine. Disordered regions lie at residues 415 to 439, 491 to 522, 563 to 775, and 855 to 885; these read DRGGRPSHRPPLPHSKARQPWSIPM, MRAPPQDRTNHLGPPEAAHAAKDSGPGNPRRE, SSDR…ITDE, and FESSASNTRAPGNSPCMAGWVRPEETVSSRR. The span at 608-640 shows a compositional bias: low complexity; sequence PSISRSPTSPASSGNFNHSPHSSGGASGVGSMS. Ser650 is subject to Phosphoserine. Residues 650–662 show a composition bias toward polar residues; the sequence is SGGSVDSVLSQIA. 2 stretches are compositionally biased toward low complexity: residues 689-713 and 722-739; these read GSSPPELPASLLGSGSGSSNVTSSS and PPSGTSATSKSTSPTLTP. Phosphoserine is present on residues Ser734 and Ser742. The span at 750 to 770 shows a compositional bias: low complexity; that stretch reads SSVSSSSSHRQSKSSGGSSSG. The SAM domain occupies 773-836; the sequence is TDEDELTGIL…LAAISELNAG (64 aa). Residues 855–865 are compositionally biased toward polar residues; the sequence is FESSASNTRAP. A compositionally biased stretch (basic and acidic residues) spans 876-885; the sequence is RPEETVSSRR.

As to quaternary structure, homooligomer. Interacts with NEK8. Central component of a complex containing at least ANKS6, INVS, NEK8 and NPHP3. ANKS6 may organize complex assembly by linking INVS and NPHP3 to NEK8 and INVS may target the complex to the proximal ciliary axoneme. Interacts (via SAM domain) with BICC1 (via KH domains) in an RNA-dependent manner. Interacts (via SAM domain) with ANKS3 (via SAM domain). In terms of processing, hydroxylated at Asn-129, most probably by HIF1AN. This hydroxylation results in decreased NEK8-binding. In terms of tissue distribution, widely expressed with moderate level in brain, skeletal muscle and testis. Expressed in renal tubules.

Its subcellular location is the cell projection. It is found in the cilium. The protein resides in the cytoplasm. In terms of biological role, required for renal function. The sequence is that of Ankyrin repeat and SAM domain-containing protein 6 (Anks6) from Rattus norvegicus (Rat).